Consider the following 121-residue polypeptide: Iron-sulfur cluster assembly protein CyaY (121 aa).

This sequence belongs to the frataxin family.

In terms of biological role, involved in iron-sulfur (Fe-S) cluster assembly. May act as a regulator of Fe-S biogenesis. The chain is Iron-sulfur cluster assembly protein CyaY from Buchnera aphidicola subsp. Schizaphis graminum (strain Sg).